The primary structure comprises 160 residues: 3-hydroxyacyl-[acyl-carrier-protein] dehydratase FabZ (160 aa).

H63 is an active-site residue.

It belongs to the thioester dehydratase family. FabZ subfamily.

It localises to the cytoplasm. The enzyme catalyses a (3R)-hydroxyacyl-[ACP] = a (2E)-enoyl-[ACP] + H2O. Functionally, involved in unsaturated fatty acids biosynthesis. Catalyzes the dehydration of short chain beta-hydroxyacyl-ACPs and long chain saturated and unsaturated beta-hydroxyacyl-ACPs. In Xylella fastidiosa (strain M12), this protein is 3-hydroxyacyl-[acyl-carrier-protein] dehydratase FabZ.